The primary structure comprises 134 residues: Inner membrane protein YqjE (134 aa).

Residues M1–G55 are Cytoplasmic-facing. Residues L56–V76 form a helical membrane-spanning segment. Topologically, residues D77–N83 are periplasmic. A helical transmembrane segment spans residues A84 to L104. Topologically, residues R105–Q134 are cytoplasmic.

The protein resides in the cell inner membrane. In Escherichia coli O157:H7, this protein is Inner membrane protein YqjE (yqjE).